The primary structure comprises 503 residues: ATP synthase subunit alpha (503 aa).

Residue 170–177 (GDRKTGKT) participates in ATP binding.

Belongs to the ATPase alpha/beta chains family. In terms of assembly, F-type ATPases have 2 components, CF(1) - the catalytic core - and CF(0) - the membrane proton channel. CF(1) has five subunits: alpha(3), beta(3), gamma(1), delta(1), epsilon(1). CF(0) has four main subunits: a(1), b(1), b'(1) and c(9-12).

The protein resides in the cellular thylakoid membrane. It catalyses the reaction ATP + H2O + 4 H(+)(in) = ADP + phosphate + 5 H(+)(out). Functionally, produces ATP from ADP in the presence of a proton gradient across the membrane. The alpha chain is a regulatory subunit. The chain is ATP synthase subunit alpha from Synechocystis sp. (strain ATCC 27184 / PCC 6803 / Kazusa).